We begin with the raw amino-acid sequence, 120 residues long: ATP-dependent Clp protease adapter protein ClpS (120 aa).

Positions 1–25 (MHARSEIRLTFNQDRPQSNEDDGSG) are disordered.

The protein belongs to the ClpS family. As to quaternary structure, binds to the N-terminal domain of the chaperone ClpA.

Its function is as follows. Involved in the modulation of the specificity of the ClpAP-mediated ATP-dependent protein degradation. The sequence is that of ATP-dependent Clp protease adapter protein ClpS from Pseudomonas putida (strain W619).